We begin with the raw amino-acid sequence, 706 residues long: Histone deacetylase HDA1 (706 aa).

Residues 1-24 show a composition bias toward basic and acidic residues; the sequence is MDSVMVKKEVLENPDHDLKRKLEE. The interval 1 to 36 is disordered; the sequence is MDSVMVKKEVLENPDHDLKRKLEENKEEENSLSTTS. A histone deacetylase region spans residues 67–396; it reads RYHAKIFTSY…ALSVAKVLIG (330 aa). His206 is a catalytic residue.

The protein belongs to the histone deacetylase family. HD type 2 subfamily.

The protein localises to the nucleus. It carries out the reaction N(6)-acetyl-L-lysyl-[histone] + H2O = L-lysyl-[histone] + acetate. Responsible for the deacetylation of lysine residues on the N-terminal part of the core histones (H2A, H2B, H3 and H4). Histone deacetylation gives a tag for epigenetic repression and plays an important role in transcriptional regulation, cell cycle progression and developmental events. Histone deacetylases act via the formation of large multiprotein complexes. The polypeptide is Histone deacetylase HDA1 (HDA1) (Saccharomyces cerevisiae (strain ATCC 204508 / S288c) (Baker's yeast)).